A 376-amino-acid chain; its full sequence is Zinc-regulated transporter 1 (376 aa).

Residues 1 to 50 (MSNVTTPWWKQWDPSEVTLADKTPDDVWKTCVLQGVYFGGNEYNGNLGAR) are Extracellular-facing. Residues 51–71 (ISSVFVILFVSTFFTMFPLIS) traverse the membrane as a helical segment. Topologically, residues 72–80 (TKVKRLRIP) are cytoplasmic. Residues 81-101 (LYVYLFAKYFGSGVIVATAFI) traverse the membrane as a helical segment. The Extracellular segment spans residues 102–122 (HLMDPAYGAIGGTTCVGQTGN). A helical transmembrane segment spans residues 123-143 (WGLYSWCPAIMLTSLTFTFLT). Topologically, residues 144–216 (DLFSSVWVER…TSMDVVQSFQ (73 aa)) are cytoplasmic. The segment covering 177-191 (VSSENDNENGTANGS) has biased composition (polar residues). The interval 177-196 (VSSENDNENGTANGSHDTKN) is disordered. A helical membrane pass occupies residues 217–237 (AQFYAFLILEFGVIFHSVMIG). Topologically, residues 238–242 (LNLGS) are extracellular. The chain crosses the membrane as a helical span at residues 243-263 (VGDEFSSLYPVLVFHQSFEGL). The Cytoplasmic segment spans residues 264–278 (GIGARLSAIEFPRSK). Residues 279–299 (RWWPWALCVAYGLTTPICVAI) form a helical membrane-spanning segment. Over 300–310 (GLGVRTRYVSG) the chain is Extracellular. Residues 311-331 (SYTALVISGVLDAISAGILLY) traverse the membrane as a helical segment. Residues 332–354 (TGLVELLARDFIFNPQRTKDLRE) lie on the Cytoplasmic side of the membrane. A helical membrane pass occupies residues 355–375 (LSFNVICTLFGAGIMALIGKW). Alanine 376 is a topological domain (extracellular).

It belongs to the ZIP transporter (TC 2.A.5) family.

The protein localises to the membrane. In terms of biological role, high-affinity zinc transport protein. The sequence is that of Zinc-regulated transporter 1 (ZRT1) from Saccharomyces cerevisiae (strain ATCC 204508 / S288c) (Baker's yeast).